A 156-amino-acid polypeptide reads, in one-letter code: uncharacterized protein (156 aa).

This is an uncharacterized protein from Acheta domesticus (House cricket).